A 256-amino-acid polypeptide reads, in one-letter code: 5'-nucleotidase SurE (256 aa).

A divalent metal cation is bound by residues aspartate 8, aspartate 9, serine 40, and asparagine 92.

It belongs to the SurE nucleotidase family. A divalent metal cation serves as cofactor.

The protein resides in the cytoplasm. The catalysed reaction is a ribonucleoside 5'-phosphate + H2O = a ribonucleoside + phosphate. In terms of biological role, nucleotidase that shows phosphatase activity on nucleoside 5'-monophosphates. This chain is 5'-nucleotidase SurE, found in Sinorhizobium fredii (strain NBRC 101917 / NGR234).